We begin with the raw amino-acid sequence, 333 residues long: Ferrochelatase (333 aa).

Fe cation is bound by residues His-202 and Glu-284.

The protein belongs to the ferrochelatase family.

Its subcellular location is the cytoplasm. It catalyses the reaction heme b + 2 H(+) = protoporphyrin IX + Fe(2+). It participates in porphyrin-containing compound metabolism; protoheme biosynthesis; protoheme from protoporphyrin-IX: step 1/1. Functionally, catalyzes the ferrous insertion into protoporphyrin IX. In Francisella tularensis subsp. holarctica (strain LVS), this protein is Ferrochelatase.